A 496-amino-acid polypeptide reads, in one-letter code: Adenosine transporter 1 (496 aa).

The Cytoplasmic segment spans residues 1–26; sequence MSSHTSTPNHASAAPPRKWYDMTSAE. A helical membrane pass occupies residues 27–47; the sequence is FYVYVVAFMCGISMLMPINAV. Residues 48–77 are Extracellular-facing; it reads FSAPSYMLQYYLYATKDPNHVPQMTNFWSN. The chain crosses the membrane as a helical span at residues 78–98; it reads VMTYYNLIGLVTGLVMEPLTL. The Cytoplasmic segment spans residues 99–107; sequence LKSFRKIPM. Residues 108–128 form a helical membrane-spanning segment; that stretch reads LVRLLGGLCILIVEIIVLMAV. The Extracellular portion of the chain corresponds to 129 to 135; sequence PARGTTE. A helical membrane pass occupies residues 136-156; it reads GGAVATMCIAGFIGGLGKSIF. Topologically, residues 157–172 are cytoplasmic; sequence ESTVYGMFGAFPPSFT. Residues 173 to 193 form a helical membrane-spanning segment; sequence SIMMGGVGISGVLTSLIQIIV. Residues 194–208 are Extracellular-facing; that stretch reads KAALPDTYEGVKKQS. Residues 209 to 229 traverse the membrane as a helical segment; it reads YIYYSLDVGIQAATFIALIMM. Residues 230–336 are Cytoplasmic-facing; sequence RFNSFAQLHF…SIISVLRSIK (107 aa). The helical transmembrane segment at 337–357 threads the bilayer; the sequence is WMFVSCAFVFVVTLFLFPGIA. Residues 358–365 are Extracellular-facing; sequence TGMFPESK. Residues 366-386 traverse the membrane as a helical segment; it reads WFATVAVFIFNCCDVLGRVAP. At 387-399 the chain is on the cytoplasmic side; that stretch reads ALRFMWPRSYNQR. Residues 400–420 form a helical membrane-spanning segment; it reads WIIVAASFARVIFVPLLLLYS. Residues 421 to 431 are Extracellular-facing; that stretch reads YHYIPSEAYGY. Residues 432–452 form a helical membrane-spanning segment; the sequence is VIMVIFGFSSGYVASMSLTLG. At 453–464 the chain is on the cytoplasmic side; the sequence is PQSKGIDNDGKR. Residues 465 to 485 form a helical membrane-spanning segment; the sequence is FVAGTLMGISILVGGTIGTVL. Topologically, residues 486-496 are extracellular; it reads SIMTQTIREKY.

It belongs to the SLC29A/ENT transporter (TC 2.A.57) family.

It is found in the membrane. The enzyme catalyses adenosine(in) = adenosine(out). Functionally, adenosine transporter. This is Adenosine transporter 1 from Crithidia fasciculata.